The following is an 861-amino-acid chain: Seed linoleate 9S-lipoxygenase-3 (861 aa).

The 126-residue stretch at 41–166 (QGFDILGSTV…HHKIDRIFFA (126 aa)) folds into the PLAT domain. A Lipoxygenase domain is found at 169 to 861 (TYLPSETPAP…FRGIPNSISI (693 aa)). The interval 215–257 (NPDSGENHARPVLGGSETYPYPRRGRTGRKPTRKDPNSESRSD) is disordered. A compositionally biased stretch (basic residues) spans 237–246 (RRGRTGRKPT). The segment covering 247–257 (RKDPNSESRSD) has biased composition (basic and acidic residues). Fe cation is bound by residues His522, His527, His713, Asn717, and Ile861.

Belongs to the lipoxygenase family. It depends on Fe cation as a cofactor.

Its subcellular location is the cytoplasm. The catalysed reaction is (9Z,12Z)-octadecadienoate + O2 = (9S)-hydroperoxy-(10E,12Z)-octadecadienoate. It participates in lipid metabolism; oxylipin biosynthesis. Its function is as follows. Plant lipoxygenase may be involved in a number of diverse aspects of plant physiology including growth and development, pest resistance, and senescence or responses to wounding. It catalyzes the hydroperoxidation of lipids containing a cis,cis-1,4-pentadiene structure. This Pisum sativum (Garden pea) protein is Seed linoleate 9S-lipoxygenase-3 (LOX1.3).